Here is a 125-residue protein sequence, read N- to C-terminus: Holo-[acyl-carrier-protein] synthase (125 aa).

2 residues coordinate Mg(2+): aspartate 8 and glutamate 56.

It belongs to the P-Pant transferase superfamily. AcpS family. Requires Mg(2+) as cofactor.

It localises to the cytoplasm. It catalyses the reaction apo-[ACP] + CoA = holo-[ACP] + adenosine 3',5'-bisphosphate + H(+). Transfers the 4'-phosphopantetheine moiety from coenzyme A to a Ser of acyl-carrier-protein. The sequence is that of Holo-[acyl-carrier-protein] synthase from Borrelia hermsii (strain HS1 / DAH).